The following is a 184-amino-acid chain: ATP synthase subunit b 1 (184 aa).

Residues 4-24 (LSILAVLAASPAMAATGPFLS) traverse the membrane as a helical segment.

Belongs to the ATPase B chain family. F-type ATPases have 2 components, F(1) - the catalytic core - and F(0) - the membrane proton channel. F(1) has five subunits: alpha(3), beta(3), gamma(1), delta(1), epsilon(1). F(0) has three main subunits: a(1), b(2) and c(10-14). The alpha and beta chains form an alternating ring which encloses part of the gamma chain. F(1) is attached to F(0) by a central stalk formed by the gamma and epsilon chains, while a peripheral stalk is formed by the delta and b chains.

It is found in the cell inner membrane. Functionally, f(1)F(0) ATP synthase produces ATP from ADP in the presence of a proton or sodium gradient. F-type ATPases consist of two structural domains, F(1) containing the extramembraneous catalytic core and F(0) containing the membrane proton channel, linked together by a central stalk and a peripheral stalk. During catalysis, ATP synthesis in the catalytic domain of F(1) is coupled via a rotary mechanism of the central stalk subunits to proton translocation. Component of the F(0) channel, it forms part of the peripheral stalk, linking F(1) to F(0). This Cereibacter sphaeroides (strain ATCC 17023 / DSM 158 / JCM 6121 / CCUG 31486 / LMG 2827 / NBRC 12203 / NCIMB 8253 / ATH 2.4.1.) (Rhodobacter sphaeroides) protein is ATP synthase subunit b 1.